The sequence spans 157 residues: Small ribosomal subunit protein uS7 (157 aa).

It belongs to the universal ribosomal protein uS7 family. In terms of assembly, part of the 30S ribosomal subunit. Contacts proteins S9 and S11.

One of the primary rRNA binding proteins, it binds directly to 16S rRNA where it nucleates assembly of the head domain of the 30S subunit. Is located at the subunit interface close to the decoding center, probably blocks exit of the E-site tRNA. This chain is Small ribosomal subunit protein uS7, found in Desulfotalea psychrophila (strain LSv54 / DSM 12343).